We begin with the raw amino-acid sequence, 242 residues long: MTKQLKLSALFVALLASGTAVAGEASVQGYTVSGQSNEIVRNNYGECWKNAYFDKASQGRVECGDAVAAPEPEPEPEPAPAPVVVVEQAPQYVDETISLSAKTLFGFDKDSLRAEAQDNLKVLAQRLSRTNVQSVRVEGHTDFMGSDKYNQALSERRAYVVANNLVSNGVPVSRISAVGLGESQAQMTQVCEAEVAKLGAKVSKAKKREALIACIEPDRRVDVKIRSIVTRQVVPAHNHHQH.

Residues 1–22 (MTKQLKLSALFVALLASGTAVA) form the signal peptide. 7 consecutive repeat copies span residues 69–70 (AP), 71–72 (EP), 73–74 (EP), 75–76 (EP), 77–78 (EP), 79–80 (AP), and 81–82 (AP). The interval 69-82 (APEPEPEPEPAPAP) is 7 X 2 AA tandem repeats of X-P. In terms of domain architecture, OmpA-like spans 92–229 (YVDETISLSA…RVDVKIRSIV (138 aa)). A disulfide bridge links C191 with C214.

The protein belongs to the outer membrane OOP (TC 1.B.6) superfamily. As to quaternary structure, the C-terminus exists in a monomer-dimer equilibrium.

It is found in the cell outer membrane. In Neisseria meningitidis serogroup B (strain ATCC BAA-335 / MC58), this protein is Outer membrane protein class 4.